The following is a 1631-amino-acid chain: ABC transporter A family member 6 (1631 aa).

A run of 7 helical transmembrane segments spans residues 25–45 (ICCEIVFPIVIIGVLFAILAL), 242–262 (SVFITAALMMFSFRLVTDVVI), 285–305 (SWIITSLITSLPVTLLIVVIF), 317–337 (GIVIITFVLYLITLLLLSFIF), 346–366 (FCGLLSFVIVIAINICGIFVS), 372–392 (VSVKLLLSIFSPIAFSNSIYI), and 416–436 (ILMLGIDIIIYIILIWYFEKV). The ABC transporter 1 domain occupies 491–724 (ISIRNLRKEF…FGQGYLLTCN (234 aa)). 527–534 (GPNGCGKS) is a binding site for ATP. A run of 7 helical transmembrane segments spans residues 866–886 (SFFLSIILPMALIIGSIILYK), 1047–1067 (AIIYFVFILMAGFSLMAGSFA), 1099–1119 (WDFFFAFIISILSCSILAGVI), 1127–1147 (FGSFLLCLILLSCAIIPLGYL), 1158–1178 (AVGAITAILFVFGLVFTIASL), 1198–1218 (IIDLIFSIISPIFALNRIVFI), and 1242–1262 (LGTPLIVLAGHAVLWNVWILL). The ABC transporter 2 domain occupies 1309–1544 (IQFKNLHKLF…FGAGYSIDVK (236 aa)). Residue 1347–1354 (GLNGGGKS) coordinates ATP.

This sequence belongs to the ABC transporter superfamily. ABCA family.

Its subcellular location is the membrane. In Dictyostelium discoideum (Social amoeba), this protein is ABC transporter A family member 6 (abcA6).